The primary structure comprises 453 residues: Gamma-aminobutyric acid receptor subunit alpha-6 (453 aa).

An N-terminal signal peptide occupies residues 1 to 19; that stretch reads MLLLLPWLFSLLWIENAQA. Topologically, residues 20–243 are extracellular; sequence QLEDEGNFYS…FHLQRKMGYF (224 aa). The N-linked (GlcNAc...) asparagine glycan is linked to Asn-31. Residue Arg-84 participates in 4-aminobutanoate binding. N-linked (GlcNAc...) asparagine glycans are attached at residues Asn-128 and Asn-141. Thr-147 contributes to the 4-aminobutanoate binding site. An intrachain disulfide couples Cys-156 to Cys-170. A helical membrane pass occupies residues 244-264; that stretch reads MIQIYTPCIMTVILSQVSFWI. At 265–270 the chain is on the cytoplasmic side; the sequence is NKESVP. The chain crosses the membrane as a helical span at residues 271 to 290; it reads ARTVFGITTVLTMTTLSISA. The Extracellular portion of the chain corresponds to 291–304; sequence RHSLPKVSYATAMD. A helical transmembrane segment spans residues 305–325; sequence WFIAVCFAFVFSALIEFAAVN. The Cytoplasmic segment spans residues 326-422; that stretch reads YFTNLQSQKA…GTSKIDQYSR (97 aa). Ser-375 bears the Phosphoserine mark. Thr-403 is subject to Phosphothreonine. A helical membrane pass occupies residues 423 to 443; sequence ILFPVAFAGFNLVYWIVYLSK. Over 444–453 the chain is Extracellular; it reads DTMEVSSTVE.

The protein belongs to the ligand-gated ion channel (TC 1.A.9) family. Gamma-aminobutyric acid receptor (TC 1.A.9.5) subfamily. GABRA6 sub-subfamily. In terms of assembly, heteropentamer, formed by a combination of alpha (GABRA1-6), beta (GABRB1-3), gamma (GABRG1-3), delta (GABRD), epsilon (GABRE), rho (GABRR1-3), pi (GABRP) and theta (GABRQ) chains, each subunit exhibiting distinct physiological and pharmacological properties. Binds UBQLN1. Expressed in brain, in cerebellar granule cells.

It is found in the postsynaptic cell membrane. It localises to the cell membrane. It carries out the reaction chloride(in) = chloride(out). In terms of biological role, alpha subunit of the heteropentameric ligand-gated chloride channel gated by gamma-aminobutyric acid (GABA), a major inhibitory neurotransmitter in the brain. GABA-gated chloride channels, also named GABA(A) receptors (GABAAR), consist of five subunits arranged around a central pore and contain GABA active binding site(s) located at the alpha and beta subunit interface(s). When activated by GABA, GABAARs selectively allow the flow of chloride anions across the cell membrane down their electrochemical gradient. Alpha-6/GABRA6 subunits are found at both synaptic and extrasynaptic sites. Chloride influx into the postsynaptic neuron following GABAAR opening decreases the neuron ability to generate a new action potential, thereby reducing nerve transmission. Extrasynaptic alpha-6-containing receptors contribute to the tonic GABAergic inhibition. Alpha-6 subunits are also present on glutamatergic synapses. The protein is Gamma-aminobutyric acid receptor subunit alpha-6 of Rattus norvegicus (Rat).